The primary structure comprises 245 residues: Terpene cyclase ausL (245 aa).

7 helical membrane-spanning segments follow: residues 17 to 37, 51 to 71, 76 to 96, 113 to 133, 138 to 158, 170 to 190, and 206 to 226; these read ILAISEVLKVVAAVGWSVNYI, IGILPLCCDIGWEFVYAWMFP, HWQGVVRVWFFLHSAVLLVTL, IVFIYIFVTIVFGAGQYALAA, ALGFHWGGALCQFLSSSGGIA, SYLIWFARAISTFAGFIKLCI, and MCWFYIVTVLSFDAAYPFLYF.

It belongs to the paxB family.

The protein resides in the membrane. It functions in the pathway secondary metabolite biosynthesis; terpenoid biosynthesis. In terms of biological role, terpene cyclase; part of the gene cluster A that mediates the biosynthesis of the fungal meroterpenoid acetoxydehydroaustin. The first step of the pathway is the synthesis of 3,5-dimethylorsellinic acid by the polyketide synthase ausA. 3,5-dimethylorsellinic acid is then prenylated by the polyprenyl transferase ausN. Further epoxidation by the FAD-dependent monooxygenase ausM and cyclization by the probable terpene cyclase ausL lead to the formation of protoaustinoid A. Protoaustinoid A is then oxidized to spiro-lactone preaustinoid A3 by the combined action of the FAD-binding monooxygenases ausB and ausC, and the dioxygenase ausE. Acid-catalyzed keto-rearrangement and ring contraction of the tetraketide portion of preaustinoid A3 by ausJ lead to the formation of preaustinoid A4. The aldo-keto reductase ausK, with the help of ausH, is involved in the next step by transforming preaustinoid A4 into isoaustinone which is in turn hydroxylated by the P450 monooxygenase ausI to form austinolide. The cytochrome P450 monooxygenase ausG then modifies austinolide to austinol. Austinol is further acetylated to austin by the O-acetyltransferase ausP, which spontaneously changes to dehydroaustin. The cytochrome P450 monooxygenase then converts dehydroaustin is into 7-dehydrodehydroaustin. The hydroxylation catalyzed by ausR permits the second O-acetyltransferase ausQ to add an additional acetyl group to the molecule, leading to the formation of acetoxydehydroaustin. Due to genetic rearrangements of the clusters and the subsequent loss of some enzymes, the end product of the Penicillium brasilianum austinoid biosynthesis clusters is acetoxydehydroaustin. The protein is Terpene cyclase ausL of Penicillium brasilianum.